A 213-amino-acid chain; its full sequence is Endoplasmic reticulum vesicle protein 25 (213 aa).

Positions 1–20 (MILRIPSLLYLFTLLTAVYA) are cleaved as a signal peptide. The Lumenal segment spans residues 21–181 (VKFDLTSDRN…TNESTNQRVK (161 aa)). A GOLD domain is found at 33–122 (PKCIWNFASA…VRSVELDVDI (90 aa)). The helical transmembrane segment at 182–202 (VFSVLIICCTIGLGVWQLLHL) threads the bilayer. Topologically, residues 203–213 (RSFFKRKYLID) are cytoplasmic.

It belongs to the EMP24/GP25L family.

The protein resides in the endoplasmic reticulum membrane. It localises to the golgi apparatus membrane. Its function is as follows. Constituent of COPII-coated endoplasmic reticulum-derived transport vesicles. Required for efficient transport of a subset of secretory proteins to the Golgi. Facilitates retrograde transport from the Golgi to the endoplasmic reticulum. The sequence is that of Endoplasmic reticulum vesicle protein 25 (ERV25) from Cryptococcus neoformans var. neoformans serotype D (strain JEC21 / ATCC MYA-565) (Filobasidiella neoformans).